A 177-amino-acid chain; its full sequence is CASP-like protein 4D1 (177 aa).

Residues 1–20 (MTAPTAPSMAAPPAPSMVSR) lie on the Cytoplasmic side of the membrane. A helical transmembrane segment spans residues 21-41 (MTALFLRVLTFAFLMVSLVIM). The Extracellular portion of the chain corresponds to 42–66 (TTNTGTIEIGIDEFKVRSKDFYSYR). A helical transmembrane segment spans residues 67-87 (YMLAAIAFGLTYTILQIALTL). At 88–107 (NHISKRNGAQTSGDGNLVFD) the chain is on the cytoplasmic side. Residues 108–128 (FYGDKVVSYILATGAAAAFGA) form a helical membrane-spanning segment. Residues 129–153 (TKELKTQLAGLGGDKFFNKGYASAS) lie on the Extracellular side of the membrane. The chain crosses the membrane as a helical span at residues 154–174 (LLLLGFVCTAILSVFSSYALP). The Cytoplasmic portion of the chain corresponds to 175–177 (KKV).

This sequence belongs to the Casparian strip membrane proteins (CASP) family. In terms of assembly, homodimer and heterodimers.

The protein localises to the cell membrane. The polypeptide is CASP-like protein 4D1 (Populus trichocarpa (Western balsam poplar)).